The following is a 461-amino-acid chain: Regulatory protein AtoC (461 aa).

Residues Arg6 to Leu120 enclose the Response regulatory domain. Asp55 bears the 4-aspartylphosphate mark. A Phosphohistidine modification is found at His73. The 230-residue stretch at Ile145–Val374 folds into the Sigma-54 factor interaction domain. Residues Gly173–Glu180 and Ala236–Glu245 each bind ATP. The segment at residues Arg433–Gln452 is a DNA-binding region (H-T-H motif).

Phosphorylated by AtoS. Contains two phosphorylation sites, which are both involved in the transduction of the acetoacetate signal. Asp-55 is probably the primary phosphorylation site, but either both residues can be phosphorylated independently by AtoS or the phosphate group can be transferred between them. In terms of processing, the N-terminus is blocked.

The protein localises to the cytoplasm. Functionally, member of the two-component regulatory system AtoS/AtoC. In the presence of acetoacetate, AtoS/AtoC stimulates the expression of the atoDAEB operon, leading to short chain fatty acid catabolism and activation of the poly-(R)-3-hydroxybutyrate (cPHB) biosynthetic pathway. Also induces the operon in response to spermidine. Involved in the regulation of motility and chemotaxis, via transcriptional induction of the flagellar regulon. AtoC acts by binding directly to the promoter region of the target genes. In addition to its role as a transcriptional regulator, functions as a post-translational regulator that inhibits polyamine biosynthesis via regulation of ornithine decarboxylase (ODC). In Escherichia coli (strain K12), this protein is Regulatory protein AtoC (atoC).